The sequence spans 298 residues: Multifunctional dioxygenase ausE (298 aa).

Substrate-binding residues include Arg-72 and Gln-127. Residues His-130 and Asp-132 each coordinate Fe cation. Substrate is bound at residue Thr-167. Position 214 (His-214) interacts with Fe cation. Residue Arg-226 participates in substrate binding.

This sequence belongs to the PhyH family. In terms of assembly, homodimer. Requires Fe cation as cofactor.

It carries out the reaction preaustinoid A1 + 2-oxoglutarate + O2 = preaustinoid A2 + succinate + CO2 + H2O. The enzyme catalyses preaustinoid A2 + 2-oxoglutarate + O2 = preaustinoid A3 + succinate + CO2 + H2O. It catalyses the reaction berkeleyone A + 2-oxoglutarate + O2 = preaustinoid A + succinate + CO2 + H2O. It participates in secondary metabolite biosynthesis; terpenoid biosynthesis. Functionally, multifunctional dioxygenase; part of the gene cluster B that mediates the biosynthesis of austinol and dehydroaustinol, two fungal meroterpenoids. The first step of the pathway is the synthesis of 3,5-dimethylorsellinic acid by the polyketide synthase ausA. 3,5-dimethylorsellinic acid is then prenylated by the polyprenyl transferase ausN. Further epoxidation by the FAD-dependent monooxygenase ausM and cyclization by the probable terpene cyclase ausL lead to the formation of protoaustinoid A. Protoaustinoid A is then oxidized to spiro-lactone preaustinoid A3 by the combined action of the FAD-binding monooxygenases ausB and ausC, and the dioxygenase ausE. Acid-catalyzed keto-rearrangement and ring contraction of the tetraketide portion of preaustinoid A3 by ausJ lead to the formation of preaustinoid A4. The aldo-keto reductase ausK, with the help of ausH, is involved in the next step by transforming preaustinoid A4 into isoaustinone which is in turn hydroxylated by the P450 monooxygenase ausI to form austinolide. Finally, the cytochrome P450 monooxygenase ausG modifies austinolide to austinol. Austinol can be further modified to dehydroaustinol which forms a diffusible complex with diorcinol that initiates conidiation. Due to genetic rearrangements of the clusters and the subsequent loss of some enzymes, the end products of the Emericella nidulans austinoid biosynthesis clusters are austinol and dehydroaustinol, even if additional enzymes, such as the O-acetyltransferase ausQ and the cytochrome P450 monooxygenase ausR are still functional. This chain is Multifunctional dioxygenase ausE, found in Emericella nidulans (strain FGSC A4 / ATCC 38163 / CBS 112.46 / NRRL 194 / M139) (Aspergillus nidulans).